The following is a 339-amino-acid chain: Uracil nucleotide/cysteinyl leukotriene receptor (339 aa).

At 1 to 36 the chain is on the extracellular side; that stretch reads MNGLEAALPSLTDNSSLAYSEQCGQETPLENMLFAC. N-linked (GlcNAc...) asparagine glycosylation is present at N14. The chain crosses the membrane as a helical span at residues 37–57; the sequence is FYLLDFILAFVGNALALWLFI. Over 58–64 the chain is Cytoplasmic; that stretch reads WDHKSGT. A helical membrane pass occupies residues 65–85; the sequence is PANVFLMHLAVADLSCVLVLP. Topologically, residues 86 to 105 are extracellular; it reads TRLVYHFSGNHWPFGEIPCR. A disulfide bridge links C104 with C181. The helical transmembrane segment at 106–126 threads the bilayer; sequence LTGFLFYLNMYASIYFLTCIS. Topologically, residues 127 to 147 are cytoplasmic; the sequence is ADRFLAIVHPVKSLKLRRPLY. A helical transmembrane segment spans residues 148-168; the sequence is AHLACAFLWIVVAVAMAPLLV. Over 169–195 the chain is Extracellular; the sequence is SPQTVQTNHTVVCLQLYREKASHHALA. N176 carries N-linked (GlcNAc...) asparagine glycosylation. Residues 196–216 traverse the membrane as a helical segment; that stretch reads SLAVAFTFPFITTVTCYLLII. Over 217-232 the chain is Cytoplasmic; it reads RSLRQGPRIEKHLKNK. A helical membrane pass occupies residues 233–253; sequence AVRMIAMVLAIFLICFVPYHI. The Extracellular portion of the chain corresponds to 254–280; it reads HRSVYVLHYRGGGTSCAAQRALALGNR. Residues 281–301 traverse the membrane as a helical segment; sequence ITSCLTSLNGALDPVMYFFVA. Topologically, residues 302-339 are cytoplasmic; sequence EKFRHALCNLLCSKRLTGPPPSFEGKTNESSLSARSEL.

It belongs to the G-protein coupled receptor 1 family.

It is found in the cell membrane. Its function is as follows. Dual specificity receptor for uracil nucleotides and cysteinyl leukotrienes (CysLTs). Signals through G(i) and inhibition of adenylyl cyclase. May mediate brain damage by nucleotides and CysLTs following ischemia. In Mus musculus (Mouse), this protein is Uracil nucleotide/cysteinyl leukotriene receptor.